Here is a 205-residue protein sequence, read N- to C-terminus: Probable molybdenum cofactor guanylyltransferase (205 aa).

GTP is bound by residues 9–11 (LAG), Lys21, Asp66, and Asp95. Asp95 contributes to the Mg(2+) binding site.

This sequence belongs to the MobA family. Mg(2+) serves as cofactor.

The protein resides in the cytoplasm. The enzyme catalyses Mo-molybdopterin + GTP + H(+) = Mo-molybdopterin guanine dinucleotide + diphosphate. In terms of biological role, transfers a GMP moiety from GTP to Mo-molybdopterin (Mo-MPT) cofactor (Moco or molybdenum cofactor) to form Mo-molybdopterin guanine dinucleotide (Mo-MGD) cofactor. This is Probable molybdenum cofactor guanylyltransferase from Pelotomaculum thermopropionicum (strain DSM 13744 / JCM 10971 / SI).